The chain runs to 145 residues: Synaptojanin-2-binding protein (145 aa).

The Cytoplasmic segment spans residues 1–117 (MNGRVDYLVT…GHRGEGDPSG (117 aa)). One can recognise a PDZ domain in the interval 13 to 100 (EINLTRGPSG…AVSLRVQHRL (88 aa)). Residues 118 to 138 (IPIFMVLVPVFALTMVAAWAF) form a helical membrane-spanning segment. The Mitochondrial intermembrane segment spans residues 139 to 145 (MRYRQQL).

Binds (via the PDZ domain) to isoform 2A of SYNJ2 (via the unique motif in the C-terminus). Interacts (via C-terminus) with RALBP1. Interacts (via PDZ domain) with ACVR2A (via C-terminus) and ACVR2B (via C-terminus). Forms a ternary complex with ACVR2A and RALBP1. Interacts with MAPK12. Interacts with DLL1; enhances DLL1 protein stability, and promotes notch signaling in endothelial cells.

It localises to the mitochondrion outer membrane. Functionally, regulates endocytosis of activin type 2 receptor kinases through the Ral/RALBP1-dependent pathway and may be involved in suppression of activin-induced signal transduction. This chain is Synaptojanin-2-binding protein (SYNJ2BP), found in Homo sapiens (Human).